Consider the following 372-residue polypeptide: Ribosomal RNA small subunit methyltransferase H (372 aa).

S-adenosyl-L-methionine is bound by residues 78–80 (GGH), Asp-97, Tyr-124, Asp-148, and Gln-155.

The protein belongs to the methyltransferase superfamily. RsmH family.

It localises to the cytoplasm. It catalyses the reaction cytidine(1402) in 16S rRNA + S-adenosyl-L-methionine = N(4)-methylcytidine(1402) in 16S rRNA + S-adenosyl-L-homocysteine + H(+). Its function is as follows. Specifically methylates the N4 position of cytidine in position 1402 (C1402) of 16S rRNA. In Mycobacterium leprae (strain Br4923), this protein is Ribosomal RNA small subunit methyltransferase H.